Reading from the N-terminus, the 492-residue chain is MKKAILSVSNKTGIVEFAKALTQLNYELYSTGGTKRILDEANVPVRSVSDLTHFPEIMDGRVKTLHPAVHGGILADRNKPQHLNELSEQHIDLIDMVVVNLYPFQQTVANPDVTMDEAIENIDIGGPTMLRAAAKNYKHVTTIVHPADYQEVLTLLRNDSLDESYRQSLMIKVFEHTAEYDEAIVRFFKGDKETLRYGENPQQSAYFVRTSNAKHTIAGAKQLHGKQLSYNNIKDADATLALVKKFDTPATVAVKHMNPCGVGIGDTIEQAFQHAYEADSQSIFGGIVALNRAVTPELAEQLHSIFLEVIIAPKFTDEALDILKQKKNVRLLEIDMTIDSNEEEFVSVSGGYLVQDKDNYVVPKEEMKVVTEVAPTDEQWEAMLLGWKVVPSVKSNAIILSNNKQTVGIGAGQMNRVGAAKIALERAIEINDHVALVSDGFFPMGDTVELAAQHGIKAIIQPGGSIKDQDSIDMANKHGIAMVVTGTRHFKH.

Residues 1–144 (MKKAILSVSN…KNYKHVTTIV (144 aa)) form the MGS-like domain.

This sequence belongs to the PurH family.

It carries out the reaction (6R)-10-formyltetrahydrofolate + 5-amino-1-(5-phospho-beta-D-ribosyl)imidazole-4-carboxamide = 5-formamido-1-(5-phospho-D-ribosyl)imidazole-4-carboxamide + (6S)-5,6,7,8-tetrahydrofolate. It catalyses the reaction IMP + H2O = 5-formamido-1-(5-phospho-D-ribosyl)imidazole-4-carboxamide. It functions in the pathway purine metabolism; IMP biosynthesis via de novo pathway; 5-formamido-1-(5-phospho-D-ribosyl)imidazole-4-carboxamide from 5-amino-1-(5-phospho-D-ribosyl)imidazole-4-carboxamide (10-formyl THF route): step 1/1. The protein operates within purine metabolism; IMP biosynthesis via de novo pathway; IMP from 5-formamido-1-(5-phospho-D-ribosyl)imidazole-4-carboxamide: step 1/1. The protein is Bifunctional purine biosynthesis protein PurH of Staphylococcus aureus (strain Newman).